A 503-amino-acid chain; its full sequence is Maturase K (503 aa).

It belongs to the intron maturase 2 family. MatK subfamily.

The protein localises to the plastid. It localises to the chloroplast. Its function is as follows. Usually encoded in the trnK tRNA gene intron. Probably assists in splicing its own and other chloroplast group II introns. The chain is Maturase K from Rosa foetida (Austrian briar).